We begin with the raw amino-acid sequence, 1135 residues long: Phytochrome C (1135 aa).

The span at 1-11 (MSSPLNNRGTC) shows a compositional bias: polar residues. The segment at 1–26 (MSSPLNNRGTCSRSSSARSRHSARVV) is disordered. Residues 216-399 (NLSLLCDVLV…VFGIQLNKEV (184 aa)) enclose the GAF domain. C321 is a binding site for phytochromobilin. PAS domains are found at residues 618-688 (VTNE…LQGI) and 748-822 (IQGD…TKLS). The region spanning 902–1122 (YIHQELRNPL…IILIEFPVAQ (221 aa)) is the Histidine kinase domain.

It belongs to the phytochrome family. As to quaternary structure, homodimer. Contains one covalently linked phytochromobilin chromophore.

Its function is as follows. Regulatory photoreceptor which exists in two forms that are reversibly interconvertible by light: the Pr form that absorbs maximally in the red region of the spectrum and the Pfr form that absorbs maximally in the far-red region. Photoconversion of Pr to Pfr induces an array of morphogenic responses, whereas reconversion of Pfr to Pr cancels the induction of those responses. Pfr controls the expression of a number of nuclear genes including those encoding the small subunit of ribulose-bisphosphate carboxylase, chlorophyll A/B binding protein, protochlorophyllide reductase, rRNA, etc. It also controls the expression of its own gene(s) in a negative feedback fashion. This is Phytochrome C (PHYC) from Sorghum bicolor (Sorghum).